Here is a 201-residue protein sequence, read N- to C-terminus: Ras-related protein Rab-1B (201 aa).

The residue at position 1 (M1) is an N-acetylmethionine. The GTP site is built by S17, G18, V19, G20, K21, S22, C23, Y33, T34, E35, S36, S39, and T40. S22 is a binding site for Mg(2+). Residues 30–45 (DDTYTESYISTIGVDF) carry the Switch 1 motif. 2 residues coordinate Mg(2+): T40 and D63. The segment at 64-83 (TAGQERFRTITSSYYRGAHG) is switch 2 region; required for interaction with REP1/CHM. The short motif at 65 to 80 (AGQERFRTITSSYYRG) is the Switch 2 element. Residues G66, N121, K122, D124, S151, A152, and K153 each coordinate GTP. The tract at residues 174–201 (GPGAASGGERPNLKIDSTPVKPAGGGCC) is disordered. Residues C200 and C201 are each lipidated (S-geranylgeranyl cysteine). Position 201 is a cysteine methyl ester (C201).

The protein belongs to the small GTPase superfamily. Rab family. As to quaternary structure, interacts with MICAL1 and MICAL2. Interacts (in GTP-bound form) with MICALCL, MICAL1 and MILCAL3. Interacts with GDI1; the interaction requires the GDP-bound state. Interacts with CHM/REP1; the interaction requires the GDP-bound form and is necessary for prenylation by GGTase II. Interacts with RabGAP TBC1D20. Interacts (in GDP-bound form) with lipid phosphatase MTMR6 (via GRAM domain); the interaction regulates MTMR6 recruitment to the endoplasmic reticulum-Golgi intermediate compartment. Interacts (in GDP-bound form) with lipid phosphatase MTMR7. Mg(2+) is required as a cofactor. Prenylated; by GGTase II, only after interaction of the substrate with Rab escort protein 1 (REP1).

It is found in the cytoplasm. The protein resides in the membrane. The protein localises to the preautophagosomal structure membrane. Its subcellular location is the perinuclear region. The enzyme catalyses GTP + H2O = GDP + phosphate + H(+). Its activity is regulated as follows. Regulated by guanine nucleotide exchange factors (GEFs) which promote the exchange of bound GDP for free GTP. Regulated by GTPase activating proteins (GAPs) including TBC1D20 which increases the GTP hydrolysis activity. Inhibited by GDP dissociation inhibitors (GDIs). Functionally, the small GTPases Rab are key regulators of intracellular membrane trafficking, from the formation of transport vesicles to their fusion with membranes. Rabs cycle between an inactive GDP-bound form and an active GTP-bound form that is able to recruit to membranes different set of downstream effectors directly responsible for vesicle formation, movement, tethering and fusion. Plays a role in the initial events of the autophagic vacuole development which take place at specialized regions of the endoplasmic reticulum. Regulates vesicular transport between the endoplasmic reticulum and successive Golgi compartments. Required to modulate the compacted morphology of the Golgi. Promotes the recruitment of lipid phosphatase MTMR6 to the endoplasmic reticulum-Golgi intermediate compartment. This is Ras-related protein Rab-1B (RAB1B) from Macaca fascicularis (Crab-eating macaque).